The chain runs to 128 residues: Aspartate 1-decarboxylase (128 aa).

Serine 25 functions as the Schiff-base intermediate with substrate; via pyruvic acid in the catalytic mechanism. Position 25 is a pyruvic acid (Ser) (serine 25). Threonine 57 provides a ligand contact to substrate. Tyrosine 58 (proton donor) is an active-site residue. 73-75 serves as a coordination point for substrate; that stretch reads GSA.

This sequence belongs to the PanD family. Heterooctamer of four alpha and four beta subunits. Pyruvate serves as cofactor. Post-translationally, is synthesized initially as an inactive proenzyme, which is activated by self-cleavage at a specific serine bond to produce a beta-subunit with a hydroxyl group at its C-terminus and an alpha-subunit with a pyruvoyl group at its N-terminus.

Its subcellular location is the cytoplasm. The enzyme catalyses L-aspartate + H(+) = beta-alanine + CO2. The protein operates within cofactor biosynthesis; (R)-pantothenate biosynthesis; beta-alanine from L-aspartate: step 1/1. Its function is as follows. Catalyzes the pyruvoyl-dependent decarboxylation of aspartate to produce beta-alanine. This chain is Aspartate 1-decarboxylase, found in Paraburkholderia xenovorans (strain LB400).